Consider the following 340-residue polypeptide: Ketol-acid reductoisomerase (NADP(+)) (340 aa).

Residues 3 to 182 (VTMYYEDDVE…GCARVGIIET (180 aa)) enclose the KARI N-terminal Rossmann domain. NADP(+) contacts are provided by residues 26–29 (YGSQ), Arg49, Ser53, and 83–86 (DELQ). Residue His108 is part of the active site. Position 134 (Gly134) interacts with NADP(+). The KARI C-terminal knotted domain maps to 183 to 328 (TFKEETEEDL…AELRKAMPFT (146 aa)). Mg(2+) is bound by residues Asp191, Glu195, Glu227, and Glu231. Substrate is bound at residue Ser252.

Belongs to the ketol-acid reductoisomerase family. Requires Mg(2+) as cofactor.

It catalyses the reaction (2R)-2,3-dihydroxy-3-methylbutanoate + NADP(+) = (2S)-2-acetolactate + NADPH + H(+). It carries out the reaction (2R,3R)-2,3-dihydroxy-3-methylpentanoate + NADP(+) = (S)-2-ethyl-2-hydroxy-3-oxobutanoate + NADPH + H(+). It participates in amino-acid biosynthesis; L-isoleucine biosynthesis; L-isoleucine from 2-oxobutanoate: step 2/4. The protein operates within amino-acid biosynthesis; L-valine biosynthesis; L-valine from pyruvate: step 2/4. Functionally, involved in the biosynthesis of branched-chain amino acids (BCAA). Catalyzes an alkyl-migration followed by a ketol-acid reduction of (S)-2-acetolactate (S2AL) to yield (R)-2,3-dihydroxy-isovalerate. In the isomerase reaction, S2AL is rearranged via a Mg-dependent methyl migration to produce 3-hydroxy-3-methyl-2-ketobutyrate (HMKB). In the reductase reaction, this 2-ketoacid undergoes a metal-dependent reduction by NADPH to yield (R)-2,3-dihydroxy-isovalerate. This chain is Ketol-acid reductoisomerase (NADP(+)), found in Lactococcus lactis subsp. lactis (strain IL1403) (Streptococcus lactis).